The following is a 77-amino-acid chain: Conotoxin LiC42 (77 aa).

The N-terminal stretch at 1 to 22 is a signal peptide; it reads MKLTCVLIIAVLFLTASQLITA. Positions 23–47 are excised as a propeptide; the sequence is DYSRDKQEYGAERLRDAMGKFKGSR. Intrachain disulfides connect C49–C62, C56–C67, and C61–C76.

The protein belongs to the conotoxin O1 superfamily. As to expression, expressed by the venom duct.

The protein localises to the secreted. In Conus lividus (Livid cone), this protein is Conotoxin LiC42.